Here is a 180-residue protein sequence, read N- to C-terminus: Ribosome maturation factor RimM (180 aa).

In terms of domain architecture, PRC barrel spans 104–177 (EGEFHLLDLV…WLLLTPPPGL (74 aa)).

This sequence belongs to the RimM family. In terms of assembly, binds ribosomal protein uS19.

The protein localises to the cytoplasm. Its function is as follows. An accessory protein needed during the final step in the assembly of 30S ribosomal subunit, possibly for assembly of the head region. Essential for efficient processing of 16S rRNA. May be needed both before and after RbfA during the maturation of 16S rRNA. It has affinity for free ribosomal 30S subunits but not for 70S ribosomes. This Synechococcus sp. (strain CC9902) protein is Ribosome maturation factor RimM.